The sequence spans 465 residues: MAP kinase-interacting serine/threonine-protein kinase 2 (465 aa).

The disordered stretch occupies residues 23–72 (ELAFSLDQPDHGDSDFGLQCSARPDMPASQPIDIPDAKKRGKKKKRGRAT). A Nuclear localization signal motif is present at residues 60–66 (KKRGKKK). Phosphoserine is present on Ser-74. The Protein kinase domain maps to 84–388 (QLQEDVLGEG…TPMVLQRNSC (305 aa)). ATP is bound by residues 90–98 (LGEGAHARV) and Lys-113. 160–162 (EKM) is a binding site for staurosporine. Asp-205 functions as the Proton acceptor in the catalytic mechanism. Glu-209 lines the staurosporine pocket. A phosphothreonine mark is found at Thr-244 and Thr-249. Positions 299, 311, and 314 each coordinate Zn(2+). Phosphothreonine is present on Thr-379. Phosphoserine is present on residues Ser-437 and Ser-440. The MAP kinase binding motif lies at 444–448 (LAQRR). Ser-452 carries the phosphoserine modification.

The protein belongs to the protein kinase superfamily. CAMK Ser/Thr protein kinase family. As to quaternary structure, monomer. Interacts with the C-terminal regions of EIF4G1 and EIF4G2; this interaction is promoted when MAPK pathways are repressed but repressed upon ERK proteins activation. Also binds to dephosphorylated MAPK3/ERK1 and MAPK1/ERK2. Isoform 1 interaction with phosphorylated MAPK3/ERK1 and MAPK1/ERK2 protects it from dephosphorylation and inactivation. Isoform 2 interacts with ESR2 and EIF4E in the nucleus. Mg(2+) serves as cofactor. Requires Zn(2+) as cofactor. In terms of processing, dual phosphorylation of Thr-244 and Thr-249 activates the kinase. Phosphorylation of Thr-379 activates the kinase. Phosphorylated upon arsenic trioxide As(2)O(3) treatment. Phosphorylated by MAPK1/ERK2, MAPK11 and MAPK14. Dephosphorylated by PP2A. As to expression, ubiquitously expressed in all tissues examined. Isoform 2 is expressed at higher levels in the ovary than is isoform 1.

It is found in the nucleus. It localises to the PML body. The protein localises to the cytoplasm. It catalyses the reaction L-seryl-[protein] + ATP = O-phospho-L-seryl-[protein] + ADP + H(+). The catalysed reaction is L-threonyl-[protein] + ATP = O-phospho-L-threonyl-[protein] + ADP + H(+). Its activity is regulated as follows. Inhibited by CGP57380 and staurosporine. Activated by phosphorylation in a negative-feedback regulatory manner in response to chemotherapy (e.g. cytarabine) and thus impairs the generation of antileukemic responses. Serine/threonine-protein kinase that phosphorylates SFPQ/PSF, HNRNPA1 and EIF4E. May play a role in the response to environmental stress and cytokines. Appears to regulate translation by phosphorylating EIF4E, thus increasing the affinity of this protein for the 7-methylguanosine-containing mRNA cap. Required for mediating PP2A-inhibition-induced EIF4E phosphorylation. Triggers EIF4E shuttling from cytoplasm to nucleus. Isoform 1 displays a high basal kinase activity, but isoform 2 exhibits a very low kinase activity. Acts as a mediator of the suppressive effects of IFNgamma on hematopoiesis. Negative regulator for signals that control generation of arsenic trioxide As(2)O(3)-dependent apoptosis and anti-leukemic responses. Involved in anti-apoptotic signaling in response to serum withdrawal. The sequence is that of MAP kinase-interacting serine/threonine-protein kinase 2 (MKNK2) from Homo sapiens (Human).